Consider the following 424-residue polypeptide: UDP-N-acetylglucosamine 1-carboxyvinyltransferase (424 aa).

Residue 22–23 participates in phosphoenolpyruvate binding; sequence KN. Arginine 93 lines the UDP-N-acetyl-alpha-D-glucosamine pocket. Catalysis depends on cysteine 117, which acts as the Proton donor. Residue cysteine 117 is modified to 2-(S-cysteinyl)pyruvic acid O-phosphothioketal. UDP-N-acetyl-alpha-D-glucosamine contacts are provided by residues 122–126, aspartate 307, and valine 329; that span reads RPIDL.

It belongs to the EPSP synthase family. MurA subfamily.

The protein localises to the cytoplasm. The catalysed reaction is phosphoenolpyruvate + UDP-N-acetyl-alpha-D-glucosamine = UDP-N-acetyl-3-O-(1-carboxyvinyl)-alpha-D-glucosamine + phosphate. It participates in cell wall biogenesis; peptidoglycan biosynthesis. Functionally, cell wall formation. Adds enolpyruvyl to UDP-N-acetylglucosamine. This chain is UDP-N-acetylglucosamine 1-carboxyvinyltransferase, found in Chlorobium limicola (strain DSM 245 / NBRC 103803 / 6330).